Reading from the N-terminus, the 205-residue chain is GTP cyclohydrolase-2 (205 aa).

A GTP-binding site is contributed by 49–53; sequence RIHSE. Positions 54, 65, and 67 each coordinate Zn(2+). Residues Q70, 92 to 94, and T114 each bind GTP; that span reads EGR. D126 (proton acceptor) is an active-site residue. R128 functions as the Nucleophile in the catalytic mechanism. Residues T149 and K154 each coordinate GTP.

Belongs to the GTP cyclohydrolase II family. Zn(2+) is required as a cofactor.

The catalysed reaction is GTP + 4 H2O = 2,5-diamino-6-hydroxy-4-(5-phosphoribosylamino)-pyrimidine + formate + 2 phosphate + 3 H(+). It participates in cofactor biosynthesis; riboflavin biosynthesis; 5-amino-6-(D-ribitylamino)uracil from GTP: step 1/4. Catalyzes the conversion of GTP to 2,5-diamino-6-ribosylamino-4(3H)-pyrimidinone 5'-phosphate (DARP), formate and pyrophosphate. The chain is GTP cyclohydrolase-2 from Shewanella loihica (strain ATCC BAA-1088 / PV-4).